Here is a 93-residue protein sequence, read N- to C-terminus: Early E3A 10.5 kDa glycoprotein (93 aa).

An N-linked (GlcNAc...) asparagine; by host glycan is attached at Asn-3. The helical transmembrane segment at 34–55 threads the bilayer; it reads MWWFSIALMFVCLIIMWLICCL.

The protein belongs to the adenoviridae E3A-1 family. In terms of processing, N-glycosylated and probably also O-glycosylated.

Its subcellular location is the host nucleus membrane. The sequence is that of Early E3A 10.5 kDa glycoprotein from Homo sapiens (Human).